Consider the following 240-residue polypeptide: Ubiquinone biosynthesis O-methyltransferase (240 aa).

Residues Arg44, Gly64, Asp85, and Met129 each coordinate S-adenosyl-L-methionine.

It belongs to the methyltransferase superfamily. UbiG/COQ3 family.

The catalysed reaction is a 3-demethylubiquinol + S-adenosyl-L-methionine = a ubiquinol + S-adenosyl-L-homocysteine + H(+). The enzyme catalyses a 3-(all-trans-polyprenyl)benzene-1,2-diol + S-adenosyl-L-methionine = a 2-methoxy-6-(all-trans-polyprenyl)phenol + S-adenosyl-L-homocysteine + H(+). Its pathway is cofactor biosynthesis; ubiquinone biosynthesis. In terms of biological role, O-methyltransferase that catalyzes the 2 O-methylation steps in the ubiquinone biosynthetic pathway. This chain is Ubiquinone biosynthesis O-methyltransferase, found in Escherichia coli (strain K12 / MC4100 / BW2952).